A 677-amino-acid chain; its full sequence is DNA ligase (677 aa).

NAD(+) contacts are provided by residues Asp35–Asp39, Ser84–Leu85, and Glu116. Catalysis depends on Lys118, which acts as the N6-AMP-lysine intermediate. NAD(+) contacts are provided by Arg139, Glu176, Lys295, and Lys319. Zn(2+) contacts are provided by Cys413, Cys416, Cys431, and Cys437. The region spanning Leu596–Gly677 is the BRCT domain.

The protein belongs to the NAD-dependent DNA ligase family. LigA subfamily. Mg(2+) serves as cofactor. It depends on Mn(2+) as a cofactor.

The enzyme catalyses NAD(+) + (deoxyribonucleotide)n-3'-hydroxyl + 5'-phospho-(deoxyribonucleotide)m = (deoxyribonucleotide)n+m + AMP + beta-nicotinamide D-nucleotide.. DNA ligase that catalyzes the formation of phosphodiester linkages between 5'-phosphoryl and 3'-hydroxyl groups in double-stranded DNA using NAD as a coenzyme and as the energy source for the reaction. It is essential for DNA replication and repair of damaged DNA. The polypeptide is DNA ligase (Pseudoalteromonas atlantica (strain T6c / ATCC BAA-1087)).